Here is a 567-residue protein sequence, read N- to C-terminus: Sensor histidine kinase MtrB (567 aa).

The segment covering 1-15 has biased composition (basic residues); it reads MIFGSRRRIRGRRGR. The tract at residues 1-20 is disordered; that stretch reads MIFGSRRRIRGRRGRSGPMT. The next 2 helical transmembrane spans lie at 42 to 62 and 213 to 233; these read VVAL…FVLT and GTMA…ALLV. The HAMP domain occupies 235-287; sequence RQVVVPVRSASRIAERFAEGHLSERMPVRGEDDMARLAVSFNDMAESLSRQIA. The Histidine kinase domain occupies 302-519; that stretch reads DVSHELRTPL…CFRLTLPLVR (218 aa). At histidine 305 the chain carries Phosphohistidine; by autocatalysis. Residues 526–567 are disordered; that stretch reads SPLPMKPIPQPVLQPVAQPNPQPMPPEYKERQRPREHAEWSG. Residues 529–551 are compositionally biased toward pro residues; that stretch reads PMKPIPQPVLQPVAQPNPQPMPP. Residues 552 to 567 show a composition bias toward basic and acidic residues; sequence EYKERQRPREHAEWSG.

The protein localises to the cell membrane. The catalysed reaction is ATP + protein L-histidine = ADP + protein N-phospho-L-histidine.. Its function is as follows. Member of the two-component regulatory system MtrA/MtrB. Seems to function as a membrane-associated protein kinase that phosphorylates MtrA in response to environmental signals. This chain is Sensor histidine kinase MtrB (mtrB), found in Mycobacterium bovis (strain ATCC BAA-935 / AF2122/97).